A 177-amino-acid chain; its full sequence is Peptide deformylase (177 aa).

Fe cation-binding residues include Cys98 and His140. Glu141 is a catalytic residue. His144 serves as a coordination point for Fe cation.

The protein belongs to the polypeptide deformylase family. Requires Fe(2+) as cofactor.

It catalyses the reaction N-terminal N-formyl-L-methionyl-[peptide] + H2O = N-terminal L-methionyl-[peptide] + formate. Its function is as follows. Removes the formyl group from the N-terminal Met of newly synthesized proteins. Requires at least a dipeptide for an efficient rate of reaction. N-terminal L-methionine is a prerequisite for activity but the enzyme has broad specificity at other positions. The sequence is that of Peptide deformylase from Zymomonas mobilis subsp. mobilis (strain ATCC 31821 / ZM4 / CP4).